Here is a 204-residue protein sequence, read N- to C-terminus: Large ribosomal subunit protein uL4 (204 aa).

Positions 49–76 (KTKGISDVSGTTAKPYGQKRTGRARQGS) are disordered.

Belongs to the universal ribosomal protein uL4 family. Part of the 50S ribosomal subunit.

One of the primary rRNA binding proteins, this protein initially binds near the 5'-end of the 23S rRNA. It is important during the early stages of 50S assembly. It makes multiple contacts with different domains of the 23S rRNA in the assembled 50S subunit and ribosome. Its function is as follows. Forms part of the polypeptide exit tunnel. The protein is Large ribosomal subunit protein uL4 of Wolbachia pipientis wMel.